Here is a 569-residue protein sequence, read N- to C-terminus: Intraflagellar transport protein 74/72 (569 aa).

Coiled-coil stretches lie at residues 75–156, 201–231, and 271–298; these read ITAT…TRNE, YRSL…VAAN, and AITL…AESH.

The protein belongs to the IFT74 family.

It is found in the cell projection. It localises to the cilium. Its subcellular location is the flagellum. The protein resides in the cytoplasm. The protein localises to the cytoskeleton. It is found in the flagellum axoneme. It localises to the flagellum basal body. Functionally, component of the intraflagellar transport complex B (IFT-B) involved in flagellar assembly. In Giardia intestinalis (strain ATCC 50803 / WB clone C6) (Giardia lamblia), this protein is Intraflagellar transport protein 74/72.